The following is a 406-amino-acid chain: Probable endo-xylogalacturonan hydrolase A (406 aa).

Positions 1-18 are cleaved as a signal peptide; it reads MTLYRNLLLLASLGLSYA. Asn-84 carries an N-linked (GlcNAc...) asparagine glycan. PbH1 repeat units follow at residues 183-213 and 214-235; these read ATNV…DIGE and STYV…ALKP. Asp-228 acts as the Proton donor in catalysis. The active site involves His-251. 3 PbH1 repeats span residues 266-289, 299-320, and 333-375; these read VKNI…KTYP, VSNV…QIQS, and PGNA…SISG. Residues Asn-278 and Asn-301 are each glycosylated (N-linked (GlcNAc...) asparagine).

This sequence belongs to the glycosyl hydrolase 28 family.

The protein resides in the secreted. Its function is as follows. Pectinolytic enzyme involved in the degradation of xylogalacturonan (xga), a galacturonan backbone heavily substituted with xylose, and which is one important component of the hairy regions of pectin. Activity requires a galacturonic acid backbone substituted with xylose. This is Probable endo-xylogalacturonan hydrolase A (xghA) from Aspergillus niger (strain ATCC MYA-4892 / CBS 513.88 / FGSC A1513).